Reading from the N-terminus, the 916-residue chain is Oxoglutarate dehydrogenase (916 aa).

It belongs to the alpha-ketoglutarate dehydrogenase family. In terms of assembly, homodimer. Part of the 2-oxoglutarate dehydrogenase (OGDH) complex composed of E1 (2-oxoglutarate dehydrogenase), E2 (dihydrolipoamide succinyltransferase) and E3 (dihydrolipoamide dehydrogenase); the complex contains multiple copies of the three enzymatic components (E1, E2 and E3). Requires thiamine diphosphate as cofactor.

It catalyses the reaction N(6)-[(R)-lipoyl]-L-lysyl-[protein] + 2-oxoglutarate + H(+) = N(6)-[(R)-S(8)-succinyldihydrolipoyl]-L-lysyl-[protein] + CO2. E1 component of the 2-oxoglutarate dehydrogenase (OGDH) complex which catalyzes the decarboxylation of 2-oxoglutarate, the first step in the conversion of 2-oxoglutarate to succinyl-CoA and CO(2). This is Oxoglutarate dehydrogenase (sucA) from Buchnera aphidicola subsp. Baizongia pistaciae (strain Bp).